Here is a 241-residue protein sequence, read N- to C-terminus: Uridylate kinase (241 aa).

ATP is bound at residue 13–16 (KVSG). Gly55 provides a ligand contact to UMP. Residues Gly56 and Arg60 each contribute to the ATP site. Residues Asp75 and 136–143 (TGNPFFTT) each bind UMP. Thr163, Gln164, Tyr169, and Asp172 together coordinate ATP.

This sequence belongs to the UMP kinase family. Homohexamer.

The protein resides in the cytoplasm. It carries out the reaction UMP + ATP = UDP + ADP. The protein operates within pyrimidine metabolism; CTP biosynthesis via de novo pathway; UDP from UMP (UMPK route): step 1/1. Its activity is regulated as follows. Inhibited by UTP. Catalyzes the reversible phosphorylation of UMP to UDP. This Parvibaculum lavamentivorans (strain DS-1 / DSM 13023 / NCIMB 13966) protein is Uridylate kinase.